The sequence spans 79 residues: UPF0401 protein YkfF (79 aa).

The protein belongs to the UPF0401 family.

The polypeptide is UPF0401 protein YkfF (ykfF) (Escherichia coli (strain K12)).